Reading from the N-terminus, the 309-residue chain is MNLNLLPDLALFVQIVDQGSFSAVARQNGITPSAVSRSVSRLEREMGCKLLQRTTRKLRLSDAGETIYQHAQQMLEAARQAMDSAGSRQTVAQGKLTLSVPKAVGRFVIHPLMMAFFHRYPQVDVCLRLEDRPLDFIDDGIDLALRITDTPSPGLHGKPLMPIRHVICATEAYLQQHGTPYTPQDLRAHSCISLGETPADARWKFRREGKTETVQTYGRYAANHTAVRLDAVRQHLGIGSLPLFTAREALANGDIVQVLPEWEFISSYSGDLWLLWAGDKHMPARMRAMIDYLSETVPALNAGSTEPAK.

Residues 1–61 enclose the HTH lysR-type domain; it reads MNLNLLPDLA…QRTTRKLRLS (61 aa). The segment at residues 21–40 is a DNA-binding region (H-T-H motif); that stretch reads FSAVARQNGITPSAVSRSVS.

This sequence belongs to the LysR transcriptional regulatory family.

This chain is Probable HTH-type transcriptional regulator LtrA (ltrA), found in Klebsiella pneumoniae.